A 395-amino-acid chain; its full sequence is Elongation factor Tu (395 aa).

The region spanning 10–204 (KPHVNIGTIG…TVDEYIPTPQ (195 aa)) is the tr-type G domain. Residues 19–26 (GHVDHGKT) are G1. Position 19 to 26 (19 to 26 (GHVDHGKT)) interacts with GTP. Thr-26 contributes to the Mg(2+) binding site. Residues 60–64 (GITIN) form a G2 region. Residues 81–84 (DAPG) are G3. GTP-binding positions include 81–85 (DAPGH) and 136–139 (NKCD). Residues 136 to 139 (NKCD) are G4. The G5 stretch occupies residues 174–176 (SAL).

This sequence belongs to the TRAFAC class translation factor GTPase superfamily. Classic translation factor GTPase family. EF-Tu/EF-1A subfamily. In terms of assembly, monomer.

It is found in the cytoplasm. The catalysed reaction is GTP + H2O = GDP + phosphate + H(+). GTP hydrolase that promotes the GTP-dependent binding of aminoacyl-tRNA to the A-site of ribosomes during protein biosynthesis. This is Elongation factor Tu from Ligilactobacillus salivarius (strain UCC118) (Lactobacillus salivarius).